The chain runs to 937 residues: Isoleucine--tRNA ligase (937 aa).

Positions 58-68 (PYANGDIHIGH) match the 'HIGH' region motif. Glutamate 561 contacts L-isoleucyl-5'-AMP. Positions 602 to 606 (KMSKS) match the 'KMSKS' region motif. ATP is bound at residue lysine 605. Cysteine 900, cysteine 903, cysteine 920, and cysteine 923 together coordinate Zn(2+).

This sequence belongs to the class-I aminoacyl-tRNA synthetase family. IleS type 1 subfamily. Monomer. Requires Zn(2+) as cofactor.

It is found in the cytoplasm. It catalyses the reaction tRNA(Ile) + L-isoleucine + ATP = L-isoleucyl-tRNA(Ile) + AMP + diphosphate. Catalyzes the attachment of isoleucine to tRNA(Ile). As IleRS can inadvertently accommodate and process structurally similar amino acids such as valine, to avoid such errors it has two additional distinct tRNA(Ile)-dependent editing activities. One activity is designated as 'pretransfer' editing and involves the hydrolysis of activated Val-AMP. The other activity is designated 'posttransfer' editing and involves deacylation of mischarged Val-tRNA(Ile). This is Isoleucine--tRNA ligase from Alcanivorax borkumensis (strain ATCC 700651 / DSM 11573 / NCIMB 13689 / SK2).